The primary structure comprises 257 residues: Hydroxyacylglutathione hydrolase (257 aa).

7 residues coordinate Zn(2+): H54, H56, D58, H59, H113, D137, and H175.

This sequence belongs to the metallo-beta-lactamase superfamily. Glyoxalase II family. In terms of assembly, monomer. Requires Zn(2+) as cofactor.

The catalysed reaction is an S-(2-hydroxyacyl)glutathione + H2O = a 2-hydroxy carboxylate + glutathione + H(+). The protein operates within secondary metabolite metabolism; methylglyoxal degradation; (R)-lactate from methylglyoxal: step 2/2. In terms of biological role, thiolesterase that catalyzes the hydrolysis of S-D-lactoyl-glutathione to form glutathione and D-lactic acid. In Acaryochloris marina (strain MBIC 11017), this protein is Hydroxyacylglutathione hydrolase.